Here is a 225-residue protein sequence, read N- to C-terminus: Deoxyribose-phosphate aldolase (225 aa).

Catalysis depends on Asp-94, which acts as the Proton donor/acceptor. Lys-158 (schiff-base intermediate with acetaldehyde) is an active-site residue. Lys-187 serves as the catalytic Proton donor/acceptor.

The protein belongs to the DeoC/FbaB aldolase family. DeoC type 1 subfamily.

It localises to the cytoplasm. The enzyme catalyses 2-deoxy-D-ribose 5-phosphate = D-glyceraldehyde 3-phosphate + acetaldehyde. It functions in the pathway carbohydrate degradation; 2-deoxy-D-ribose 1-phosphate degradation; D-glyceraldehyde 3-phosphate and acetaldehyde from 2-deoxy-alpha-D-ribose 1-phosphate: step 2/2. Catalyzes a reversible aldol reaction between acetaldehyde and D-glyceraldehyde 3-phosphate to generate 2-deoxy-D-ribose 5-phosphate. The protein is Deoxyribose-phosphate aldolase of Thermococcus gammatolerans (strain DSM 15229 / JCM 11827 / EJ3).